A 422-amino-acid polypeptide reads, in one-letter code: Ubiquitin-conjugating enzyme E2 Q1 (422 aa).

N-acetylmethionine is present on M1. Low complexity predominate over residues 1-24 (MQQPQPQGQQQPGPGQQLGVQGAA). Disordered regions lie at residues 1–40 (MQQPQPQGQQQPGPGQQLGVQGAAPGAGGGPGGGPGPGPC) and 173–221 (QPLP…EDDG). Positions 25 to 35 (PGAGGGPGGGP) are enriched in gly residues. Acidic residues predominate over residues 185-200 (VSSEDEDEEMPEDTED). A compositionally biased stretch (basic and acidic residues) spans 212–221 (AEGKKSEDDG). The UBC core domain maps to 251–415 (QATDRLMKEL…VQIHEKNGWY (165 aa)). Residue C351 is the Glycyl thioester intermediate of the active site.

It belongs to the ubiquitin-conjugating enzyme family. As to quaternary structure, monomer and homodimer. Only the homodimer is linked to ubiquitin through thiolester activation. Interacts (via N-terminus) with B4GALT1 (via N-terminal cytoplasmic domain); the interaction is direct. Post-translationally, autoubiquitinated in vitro in the presence of NEDD4L. Expressed in liver, brain, heart, spleen, lung, kidney, muscle, ovary, epididymis, testis and placenta. Also expressed in thymus and ES cells. Only expressed in the uterus during pregnancy. Expressed in oocytes and during subsequent embryonic development stages (4-cell stage, blastocyst, 8.5 dpc, 13.5 dpc, 16.5 dpc and 18.5 dpc).

It localises to the nucleus. Its subcellular location is the cell projection. The protein resides in the filopodium. The protein localises to the cytoplasm. It is found in the cytosol. The catalysed reaction is S-ubiquitinyl-[E1 ubiquitin-activating enzyme]-L-cysteine + [E2 ubiquitin-conjugating enzyme]-L-cysteine = [E1 ubiquitin-activating enzyme]-L-cysteine + S-ubiquitinyl-[E2 ubiquitin-conjugating enzyme]-L-cysteine.. It participates in protein modification; protein ubiquitination. Functionally, catalyzes the covalent attachment of ubiquitin to other proteins. Involved in female fertility and embryo implantation. May be involved in hormonal homeostasis in females. Involved in regulation of B4GALT1 cell surface expression, B4GALT1-mediated cell adhesion to laminin and embryoid body formation. In Mus musculus (Mouse), this protein is Ubiquitin-conjugating enzyme E2 Q1 (Ube2q1).